A 142-amino-acid polypeptide reads, in one-letter code: ATP synthase epsilon chain (142 aa).

It belongs to the ATPase epsilon chain family. As to quaternary structure, F-type ATPases have 2 components, CF(1) - the catalytic core - and CF(0) - the membrane proton channel. CF(1) has five subunits: alpha(3), beta(3), gamma(1), delta(1), epsilon(1). CF(0) has three main subunits: a, b and c.

The protein localises to the cell inner membrane. Produces ATP from ADP in the presence of a proton gradient across the membrane. This chain is ATP synthase epsilon chain, found in Shewanella sediminis (strain HAW-EB3).